The primary structure comprises 483 residues: Phosphomethylpyrimidine synthase (483 aa).

Substrate contacts are provided by residues Asn97, Met126, Tyr156, His192, 212–214 (SRG), 253–256 (DSLR), and Glu292. His296 contributes to the Zn(2+) binding site. Residue Tyr319 coordinates substrate. Zn(2+) is bound at residue His360. [4Fe-4S] cluster-binding residues include Cys440, Cys443, and Cys448.

Belongs to the ThiC family. [4Fe-4S] cluster serves as cofactor.

It carries out the reaction 5-amino-1-(5-phospho-beta-D-ribosyl)imidazole + S-adenosyl-L-methionine = 4-amino-2-methyl-5-(phosphooxymethyl)pyrimidine + CO + 5'-deoxyadenosine + formate + L-methionine + 3 H(+). It functions in the pathway cofactor biosynthesis; thiamine diphosphate biosynthesis. Catalyzes the synthesis of the hydroxymethylpyrimidine phosphate (HMP-P) moiety of thiamine from aminoimidazole ribotide (AIR) in a radical S-adenosyl-L-methionine (SAM)-dependent reaction. This is Phosphomethylpyrimidine synthase from Parasynechococcus marenigrum (strain WH8102).